Here is a 79-residue protein sequence, read N- to C-terminus: UPF0401 protein YkfF (79 aa).

The protein belongs to the UPF0401 family.

The sequence is that of UPF0401 protein YkfF (ykfF) from Escherichia coli (strain K12).